The sequence spans 375 residues: MKFELDTTDGRARRGRLVFERGVVETPAFMPVGTYGTVKGMTPEEVEATGAQIILGNTFHLWLRPGQEIMKLHGDLHDFMQWKGPILTDSGGFQVFSLGDIRKITEQGVHFRNPINGDPIFLDPEKSMEIQYDLGSDIVMIFDECTPYPADWDYAKCSMEMSLRWAKRSRDRFDGLGNKNALFGIIQGSVYEDLRDISVKGLVEIGFDGYAVGGLAVGEPKADMHRILEHVCPQIPADKPRYLMGVGKPEDLVEGVRRGIDMFDCVMPTRNARNGHLFVTDGVVKIRNAKHKSDTSPLDAECDCYTCRNYSRAYLHHLDRCNEILGARLNTIHNLRYYQRLMAGLRKAIEEGKLESFVTEFYQRQGRPVPPLNVD.

The Proton acceptor role is filled by aspartate 89. Substrate-binding positions include 89–93 (DSGGF), aspartate 143, glutamine 187, and glycine 214. The segment at 245-251 (GVGKPED) is RNA binding. Residue aspartate 264 is the Nucleophile of the active site. The tract at residues 269–273 (TRNAR) is RNA binding; important for wobble base 34 recognition. Residues cysteine 302, cysteine 304, cysteine 307, and histidine 333 each contribute to the Zn(2+) site.

This sequence belongs to the queuine tRNA-ribosyltransferase family. Homodimer. Within each dimer, one monomer is responsible for RNA recognition and catalysis, while the other monomer binds to the replacement base PreQ1. It depends on Zn(2+) as a cofactor.

The enzyme catalyses 7-aminomethyl-7-carbaguanine + guanosine(34) in tRNA = 7-aminomethyl-7-carbaguanosine(34) in tRNA + guanine. It participates in tRNA modification; tRNA-queuosine biosynthesis. Catalyzes the base-exchange of a guanine (G) residue with the queuine precursor 7-aminomethyl-7-deazaguanine (PreQ1) at position 34 (anticodon wobble position) in tRNAs with GU(N) anticodons (tRNA-Asp, -Asn, -His and -Tyr). Catalysis occurs through a double-displacement mechanism. The nucleophile active site attacks the C1' of nucleotide 34 to detach the guanine base from the RNA, forming a covalent enzyme-RNA intermediate. The proton acceptor active site deprotonates the incoming PreQ1, allowing a nucleophilic attack on the C1' of the ribose to form the product. After dissociation, two additional enzymatic reactions on the tRNA convert PreQ1 to queuine (Q), resulting in the hypermodified nucleoside queuosine (7-(((4,5-cis-dihydroxy-2-cyclopenten-1-yl)amino)methyl)-7-deazaguanosine). This is Queuine tRNA-ribosyltransferase from Salmonella arizonae (strain ATCC BAA-731 / CDC346-86 / RSK2980).